The sequence spans 392 residues: Elongation factor Tu (392 aa).

Residues 10 to 202 (KVHVNVGTIG…VLDEYIEDPI (193 aa)) form the tr-type G domain. The G1 stretch occupies residues 19–26 (GHVDHGKT). A GTP-binding site is contributed by 19 to 26 (GHVDHGKT). A Mg(2+)-binding site is contributed by threonine 26. Positions 60–64 (GITIN) are G2. The tract at residues 81–84 (DCPG) is G3. GTP is bound by residues 81-85 (DCPGH) and 136-139 (NKCD). A G4 region spans residues 136–139 (NKCD). Positions 174–176 (SAL) are G5.

Belongs to the TRAFAC class translation factor GTPase superfamily. Classic translation factor GTPase family. EF-Tu/EF-1A subfamily. In terms of assembly, monomer.

The protein resides in the cytoplasm. It catalyses the reaction GTP + H2O = GDP + phosphate + H(+). Its function is as follows. GTP hydrolase that promotes the GTP-dependent binding of aminoacyl-tRNA to the A-site of ribosomes during protein biosynthesis. This Apple proliferation phytoplasma protein is Elongation factor Tu.